The primary structure comprises 987 residues: Ephrin type-B receptor 4a (987 aa).

The signal sequence occupies residues M1–A24. Residues E25 to G548 are Extracellular-facing. The 180-residue stretch at E26 to R205 folds into the Eph LBD domain. 2 disulfides stabilise this stretch: C70/C187 and C104/C114. The disordered stretch occupies residues D319–N340. Positions T326–P335 are enriched in pro residues. Fibronectin type-III domains lie at P328–N438 and L442–D536. Residues I549–I569 traverse the membrane as a helical segment. Topologically, residues R570–Y987 are cytoplasmic. In terms of domain architecture, Protein kinase spans V621–I884. Residues I627–V635 and K653 contribute to the ATP site. Residue D746 is the Proton acceptor of the active site. One can recognise an SAM domain in the interval S914 to Q978.

The protein belongs to the protein kinase superfamily. Tyr protein kinase family. Ephrin receptor subfamily.

The protein resides in the cell membrane. The enzyme catalyses L-tyrosyl-[protein] + ATP = O-phospho-L-tyrosyl-[protein] + ADP + H(+). Functionally, receptor tyrosine kinase which binds promiscuously transmembrane ephrin-B family ligands residing on adjacent cells, leading to contact-dependent bidirectional signaling into neighboring cells. The signaling pathway downstream of the receptor is referred to as forward signaling while the signaling pathway downstream of the ephrin ligand is referred to as reverse signaling. Together with its cognate ligand/functional ligand EFNB2 is involved in the regulation of cell adhesion and cell migration, and plays a central role in heart morphogenesis, angiogenesis and blood vessel remodeling and permeability. EPHB4-mediated forward signaling controls cellular repulsion and segregation from EFNB2-expressing cells. Involved in somitogenesis. The polypeptide is Ephrin type-B receptor 4a (Danio rerio (Zebrafish)).